The following is a 68-amino-acid chain: ATP-dependent 6-phosphofructokinase (68 aa).

17–20 (GDGT) lines the ATP pocket. Position 18 (D18) interacts with Mg(2+). Catalysis depends on D48, which acts as the Proton acceptor.

This sequence belongs to the phosphofructokinase type A (PFKA) family. PPi-dependent PFK group II subfamily. Atypical ATP-dependent clade 'X' sub-subfamily. In terms of assembly, homotetramer. The cofactor is Mg(2+).

Its subcellular location is the cytoplasm. The enzyme catalyses beta-D-fructose 6-phosphate + ATP = beta-D-fructose 1,6-bisphosphate + ADP + H(+). Its pathway is carbohydrate degradation; glycolysis; D-glyceraldehyde 3-phosphate and glycerone phosphate from D-glucose: step 3/4. Allosterically activated by AMP. In terms of biological role, catalyzes the phosphorylation of D-fructose 6-phosphate to fructose 1,6-bisphosphate by ATP, the first committing step of glycolysis. The sequence is that of ATP-dependent 6-phosphofructokinase (PFK) from Triticum aestivum (Wheat).